A 356-amino-acid polypeptide reads, in one-letter code: Phosphoribosyl pyrophosphate synthase-associated protein 1 (356 aa).

Methionine 1 is modified (N-acetylmethionine). Phosphoserine occurs at positions 177 and 215.

It belongs to the ribose-phosphate pyrophosphokinase family. Binds to PRPS1 and PRPS2. Ubiquitous.

Functionally, seems to play a negative regulatory role in 5-phosphoribose 1-diphosphate synthesis. This Rattus norvegicus (Rat) protein is Phosphoribosyl pyrophosphate synthase-associated protein 1 (Prpsap1).